Reading from the N-terminus, the 306-residue chain is Beta-lactamase (306 aa).

Positions 1–34 form a signal peptide, tat-type signal; sequence MDRTTARPNRRAVLATGVGAALAATAAAAGPAHA. Ser-82 acts as the Acyl-ester intermediate in catalysis. Substrate is bound at residue 250–252; it reads KTG.

This sequence belongs to the class-A beta-lactamase family. In terms of processing, predicted to be exported by the Tat system. The position of the signal peptide cleavage has not been experimentally proven.

It catalyses the reaction a beta-lactam + H2O = a substituted beta-amino acid. The chain is Beta-lactamase (blaF) from Streptomyces fradiae (Streptomyces roseoflavus).